The chain runs to 483 residues: Trimethylamine methyltransferase MttB (483 aa).

A non-standard amino acid (pyrrolysine) is located at residue Pyl-334.

It belongs to the trimethylamine methyltransferase family. As to quaternary structure, can form a complex with MttC.

It carries out the reaction Co(I)-[trimethylamine-specific corrinoid protein] + trimethylamine + H(+) = methyl-Co(III)-[trimethylamine-specific corrinoid protein] + dimethylamine. It functions in the pathway one-carbon metabolism; methanogenesis from trimethylamine. Its function is as follows. Catalyzes the transfer of a methyl group from trimethylamine to the corrinoid cofactor of MttC. The chain is Trimethylamine methyltransferase MttB (mttB) from Methanosarcina thermophila.